The following is an 843-amino-acid chain: Protein P (843 aa).

A terminal protein domain (TP) region spans residues 1–177 (MPLSYQHFRK…FCGSPYSWEQ (177 aa)). The segment at 178 to 346 (ELQHGRLVFQ…YCLTHIVNLL (169 aa)) is spacer. 2 disordered regions span residues 220–273 (QSRL…SSTS) and 289–316 (LSTS…RSQS). Positions 289–299 (LSTSKRQSSSG) are enriched in polar residues. The interval 347–690 (EDWGPCTEHG…YLNLYPVARQ (344 aa)) is polymerase/reverse transcriptase domain (RT). A Reverse transcriptase domain is found at 357-600 (EHNIRIPRTP…YSLNFMGYVI (244 aa)). 3 residues coordinate Mg(2+): Asp-429, Asp-551, and Asp-552.

The protein belongs to the hepadnaviridae P protein family.

The catalysed reaction is DNA(n) + a 2'-deoxyribonucleoside 5'-triphosphate = DNA(n+1) + diphosphate. It carries out the reaction Endonucleolytic cleavage to 5'-phosphomonoester.. Its activity is regulated as follows. Activated by host HSP70 and HSP40 in vitro to be able to bind the epsilon loop of the pgRNA. Because deletion of the RNase H region renders the protein partly chaperone-independent, the chaperones may be needed indirectly to relieve occlusion of the RNA-binding site by this domain. Inhibited by several reverse-transcriptase inhibitors: Lamivudine, Adefovir and Entecavir. Its function is as follows. Multifunctional enzyme that converts the viral RNA genome into dsDNA in viral cytoplasmic capsids. This enzyme displays a DNA polymerase activity that can copy either DNA or RNA templates, and a ribonuclease H (RNase H) activity that cleaves the RNA strand of RNA-DNA heteroduplexes in a partially processive 3'- to 5'-endonucleasic mode. Neo-synthesized pregenomic RNA (pgRNA) are encapsidated together with the P protein, and reverse-transcribed inside the nucleocapsid. Initiation of reverse-transcription occurs first by binding the epsilon loop on the pgRNA genome, and is initiated by protein priming, thereby the 5'-end of (-)DNA is covalently linked to P protein. Partial (+)DNA is synthesized from the (-)DNA template and generates the relaxed circular DNA (RC-DNA) genome. After budding and infection, the RC-DNA migrates in the nucleus, and is converted into a plasmid-like covalently closed circular DNA (cccDNA). The activity of P protein does not seem to be necessary for cccDNA generation, and is presumably released from (+)DNA by host nuclear DNA repair machinery. The chain is Protein P from Hepatitis B virus genotype C subtype ad (isolate Japan/S-179/1988) (HBV-C).